A 467-amino-acid polypeptide reads, in one-letter code: Asparagine--tRNA ligase (467 aa).

Belongs to the class-II aminoacyl-tRNA synthetase family. As to quaternary structure, homodimer.

Its subcellular location is the cytoplasm. It catalyses the reaction tRNA(Asn) + L-asparagine + ATP = L-asparaginyl-tRNA(Asn) + AMP + diphosphate + H(+). In Actinobacillus succinogenes (strain ATCC 55618 / DSM 22257 / CCUG 43843 / 130Z), this protein is Asparagine--tRNA ligase.